The following is a 389-amino-acid chain: Formate-dependent phosphoribosylglycinamide formyltransferase (389 aa).

Residues 21 to 22 and Glu-81 each bind N(1)-(5-phospho-beta-D-ribosyl)glycinamide; that span reads EL. Residues Arg-113, Lys-154, 159–164, 194–197, and Glu-202 each bind ATP; these read SSGKGQ and EEFI. Residues 118 to 307 form the ATP-grasp domain; that stretch reads RLAAEKLGLK…EFEIHVRAIL (190 aa). Residues Glu-266 and Glu-278 each coordinate Mg(2+). N(1)-(5-phospho-beta-D-ribosyl)glycinamide contacts are provided by residues Asp-285, Lys-353, and 360–361; that span reads RR.

The protein belongs to the PurK/PurT family. In terms of assembly, homodimer.

The enzyme catalyses N(1)-(5-phospho-beta-D-ribosyl)glycinamide + formate + ATP = N(2)-formyl-N(1)-(5-phospho-beta-D-ribosyl)glycinamide + ADP + phosphate + H(+). It functions in the pathway purine metabolism; IMP biosynthesis via de novo pathway; N(2)-formyl-N(1)-(5-phospho-D-ribosyl)glycinamide from N(1)-(5-phospho-D-ribosyl)glycinamide (formate route): step 1/1. Functionally, involved in the de novo purine biosynthesis. Catalyzes the transfer of formate to 5-phospho-ribosyl-glycinamide (GAR), producing 5-phospho-ribosyl-N-formylglycinamide (FGAR). Formate is provided by PurU via hydrolysis of 10-formyl-tetrahydrofolate. In Methanocaldococcus jannaschii (strain ATCC 43067 / DSM 2661 / JAL-1 / JCM 10045 / NBRC 100440) (Methanococcus jannaschii), this protein is Formate-dependent phosphoribosylglycinamide formyltransferase.